The primary structure comprises 491 residues: Bifunctional protein HldE (491 aa).

A ribokinase region spans residues 1–330 (MDRKMVESLF…AAVSLEHRDS (330 aa)). ATP is bound at residue 205 to 208 (NRKE). The active site involves Asp-275. Residues 356–491 (FTNGCFDLLH…KVLERYTDEQ (136 aa)) form a cytidylyltransferase region.

This sequence in the N-terminal section; belongs to the carbohydrate kinase PfkB family. It in the C-terminal section; belongs to the cytidylyltransferase family. As to quaternary structure, homodimer.

The catalysed reaction is D-glycero-beta-D-manno-heptose 7-phosphate + ATP = D-glycero-beta-D-manno-heptose 1,7-bisphosphate + ADP + H(+). The enzyme catalyses D-glycero-beta-D-manno-heptose 1-phosphate + ATP + H(+) = ADP-D-glycero-beta-D-manno-heptose + diphosphate. Its pathway is nucleotide-sugar biosynthesis; ADP-L-glycero-beta-D-manno-heptose biosynthesis; ADP-L-glycero-beta-D-manno-heptose from D-glycero-beta-D-manno-heptose 7-phosphate: step 1/4. It functions in the pathway nucleotide-sugar biosynthesis; ADP-L-glycero-beta-D-manno-heptose biosynthesis; ADP-L-glycero-beta-D-manno-heptose from D-glycero-beta-D-manno-heptose 7-phosphate: step 3/4. Its function is as follows. Catalyzes the phosphorylation of D-glycero-D-manno-heptose 7-phosphate at the C-1 position to selectively form D-glycero-beta-D-manno-heptose-1,7-bisphosphate. Catalyzes the ADP transfer from ATP to D-glycero-beta-D-manno-heptose 1-phosphate, yielding ADP-D-glycero-beta-D-manno-heptose. This Trichlorobacter lovleyi (strain ATCC BAA-1151 / DSM 17278 / SZ) (Geobacter lovleyi) protein is Bifunctional protein HldE.